The sequence spans 261 residues: DNA oxidative demethylase ALKBH2 (261 aa).

The interval 1–57 is disordered; that stretch reads MDRFLVKGAQGGLLRKQEEQEPTGEEPAVLGGDKESTRKRPRREAPGNGGHSAGPSW. The short motif at 3–7 is the PCNA-binding element; sequence RFLVK. Substrate-binding positions include 102-104 and 122-124; these read FGK and YTF. The Fe2OG dioxygenase domain maps to 152–257; sequence TFNFVLINRY…RVNLTFRKIL (106 aa). 2-oxoglutarate is bound by residues N159, Y161, and H171. Fe cation is bound by residues H171 and D173. D174 lines the substrate pocket. Positions 236, 248, 252, and 254 each coordinate 2-oxoglutarate. H236 serves as a coordination point for Fe cation.

It belongs to the alkB family. In terms of assembly, interacts with PCNA homotrimer; this interaction is enhanced during the S-phase of the cell cycle. Interacts with nucleolar proteins NCL, UBTF and NPM1. Interacts with XRCC5-XRCC6 heterodimer. The cofactor is Fe(2+). As to expression, detected in colon, small intestine, ovary, testis, prostate, skeletal muscle, heart, liver and urinary bladder.

The protein resides in the nucleus. Its subcellular location is the nucleolus. The protein localises to the nucleoplasm. It catalyses the reaction a methylated nucleobase within DNA + 2-oxoglutarate + O2 = a nucleobase within DNA + formaldehyde + succinate + CO2. It carries out the reaction an N(1)-methyl-2'-deoxyadenosine in double-stranded DNA + 2-oxoglutarate + O2 = a 2'-deoxyadenosine in double-stranded DNA + formaldehyde + succinate + CO2 + H(+). The enzyme catalyses an N(1)-methyl-2'-deoxyadenosine in single-stranded DNA + 2-oxoglutarate + O2 = a 2'-deoxyadenosine in single-stranded DNA + formaldehyde + succinate + CO2 + H(+). The catalysed reaction is an N(3)-methyl-2'-deoxycytidine in double-stranded DNA + 2-oxoglutarate + O2 = a 2'-deoxycytidine in double-stranded DNA + formaldehyde + succinate + CO2 + H(+). It catalyses the reaction an N(3)-methyl-2'-deoxycytidine in single-stranded DNA + 2-oxoglutarate + O2 = a 2'-deoxycytidine in single-stranded DNA + formaldehyde + succinate + CO2 + H(+). It carries out the reaction a 1,N(6)-etheno-2'-deoxyadenosine in double-stranded DNA + 2-oxoglutarate + O2 + H2O = a 2'-deoxyadenosine in double-stranded DNA + glyoxal + succinate + CO2. The enzyme catalyses a 1,N(6)-etheno-2'-deoxyadenosine in single-stranded DNA + 2-oxoglutarate + O2 + H2O = a 2'-deoxyadenosine in single-stranded DNA + glyoxal + succinate + CO2. The catalysed reaction is a 3,N(4)-etheno-2'-deoxycytidine in double-stranded DNA + 2-oxoglutarate + O2 + H2O = a 2'-deoxycytidine in double-stranded DNA + glyoxal + succinate + CO2. It catalyses the reaction a 3,N(4)-etheno-2'-deoxycytidine in single-stranded DNA + 2-oxoglutarate + O2 + H2O = a 2'-deoxycytidine in single-stranded DNA + glyoxal + succinate + CO2. It carries out the reaction a 1,N(2)-etheno-2'-deoxyguanosine in double-stranded DNA + 2-oxoglutarate + O2 + H2O = a 2'-deoxyguanosine in double-stranded DNA + glyoxal + succinate + CO2. With respect to regulation, activated by ascorbate and magnesium ions. In terms of biological role, dioxygenase that repairs alkylated nucleic acid bases by direct reversal oxidative dealkylation. Can process both double-stranded (ds) and single-stranded (ss) DNA substrates, with a strong preference for dsDNA. Uses molecular oxygen, 2-oxoglutarate and iron as cofactors to oxidize the alkyl groups that are subsequently released as aldehydes, regenerating the undamaged bases. Probes the base pair stability, locates a weakened base pair and flips the damaged base to accommodate the lesion in its active site for efficient catalysis. Repairs monoalkylated bases, specifically N1-methyladenine and N3-methylcytosine, as well as higher order alkyl adducts such as bases modified with exocyclic bridged adducts known as etheno adducts including 1,N6-ethenoadenine, 3,N4-ethenocytosine and 1,N2-ethenoguanine. Acts as a gatekeeper of genomic integrity under alkylation stress. Efficiently repairs alkylated lesions in ribosomal DNA (rDNA). These lesions can cause ss- and dsDNA strand breaks that severely impair rDNA transcription. In a response mechanism to DNA damage, associates with PCNA at replication forks to repair alkylated adducts prior to replication. This chain is DNA oxidative demethylase ALKBH2 (ALKBH2), found in Homo sapiens (Human).